A 120-amino-acid chain; its full sequence is NAD(P)H-quinone oxidoreductase subunit 3, chloroplastic (120 aa).

Transmembrane regions (helical) follow at residues 9-29 (IFWA…FVSG), 64-84 (MFAL…PWAM), and 88-108 (VLGI…IVGL).

The protein belongs to the complex I subunit 3 family. In terms of assembly, NDH is composed of at least 16 different subunits, 5 of which are encoded in the nucleus.

It localises to the plastid. It is found in the chloroplast thylakoid membrane. The catalysed reaction is a plastoquinone + NADH + (n+1) H(+)(in) = a plastoquinol + NAD(+) + n H(+)(out). The enzyme catalyses a plastoquinone + NADPH + (n+1) H(+)(in) = a plastoquinol + NADP(+) + n H(+)(out). Its function is as follows. NDH shuttles electrons from NAD(P)H:plastoquinone, via FMN and iron-sulfur (Fe-S) centers, to quinones in the photosynthetic chain and possibly in a chloroplast respiratory chain. The immediate electron acceptor for the enzyme in this species is believed to be plastoquinone. Couples the redox reaction to proton translocation, and thus conserves the redox energy in a proton gradient. The protein is NAD(P)H-quinone oxidoreductase subunit 3, chloroplastic of Daucus carota (Wild carrot).